Reading from the N-terminus, the 251-residue chain is Putative mediator of RNA polymerase II transcription subunit 18 (251 aa).

The protein belongs to the Mediator complex subunit 18 family. In terms of assembly, component of the Mediator complex.

The protein localises to the nucleus. In terms of biological role, component of the Mediator complex, a coactivator involved in the regulated transcription of nearly all RNA polymerase II-dependent genes. Mediator functions as a bridge to convey information from gene-specific regulatory proteins to the basal RNA polymerase II transcription machinery. Mediator is recruited to promoters by direct interactions with regulatory proteins and serves as a scaffold for the assembly of a functional preinitiation complex with RNA polymerase II and the general transcription factors. The chain is Putative mediator of RNA polymerase II transcription subunit 18 (med18) from Dictyostelium discoideum (Social amoeba).